A 74-amino-acid polypeptide reads, in one-letter code: Large ribosomal subunit protein bL31 (74 aa).

Zn(2+) contacts are provided by Cys16, Cys18, Cys38, and Cys41.

The protein belongs to the bacterial ribosomal protein bL31 family. Type A subfamily. As to quaternary structure, part of the 50S ribosomal subunit. It depends on Zn(2+) as a cofactor.

Functionally, binds the 23S rRNA. The polypeptide is Large ribosomal subunit protein bL31 (Acinetobacter baylyi (strain ATCC 33305 / BD413 / ADP1)).